A 155-amino-acid chain; its full sequence is SsrA-binding protein (155 aa).

The disordered stretch occupies residues 136–155; the sequence is REDLKRRQDQRDIQRAMKSY.

This sequence belongs to the SmpB family.

It localises to the cytoplasm. Functionally, required for rescue of stalled ribosomes mediated by trans-translation. Binds to transfer-messenger RNA (tmRNA), required for stable association of tmRNA with ribosomes. tmRNA and SmpB together mimic tRNA shape, replacing the anticodon stem-loop with SmpB. tmRNA is encoded by the ssrA gene; the 2 termini fold to resemble tRNA(Ala) and it encodes a 'tag peptide', a short internal open reading frame. During trans-translation Ala-aminoacylated tmRNA acts like a tRNA, entering the A-site of stalled ribosomes, displacing the stalled mRNA. The ribosome then switches to translate the ORF on the tmRNA; the nascent peptide is terminated with the 'tag peptide' encoded by the tmRNA and targeted for degradation. The ribosome is freed to recommence translation, which seems to be the essential function of trans-translation. The polypeptide is SsrA-binding protein (Nostoc punctiforme (strain ATCC 29133 / PCC 73102)).